We begin with the raw amino-acid sequence, 356 residues long: SERTA domain-containing protein 4 (356 aa).

Residues 33–53 (SYGGPSPPGPAQAPLQGDRGA) are disordered. An SERTA domain is found at 101-147 (IFEERAHILYMSLEKLKFIDDPEVYLRRSVLINNLMKRIHGEIIMQN). Over residues 215–232 (TAASSPSASSSSSSSSSS) the composition is skewed to low complexity. Disordered stretches follow at residues 215 to 238 (TAASSPSASSSSSSSSSSPPLPLP), 280 to 302 (KLNDEKANDDTNRDGGPLSHEPV), and 332 to 356 (WKKSLRKKEASPPSNKLCCSKGSKI). Over residues 280–292 (KLNDEKANDDTNR) the composition is skewed to basic and acidic residues.

In Homo sapiens (Human), this protein is SERTA domain-containing protein 4 (SERTAD4).